We begin with the raw amino-acid sequence, 45 residues long: uncharacterized protein (45 aa).

The signal sequence occupies residues 1-19 (MTFQILFLFVFHFVYIFRA).

This is an uncharacterized protein from Saccharomyces cerevisiae (strain ATCC 204508 / S288c) (Baker's yeast).